A 476-amino-acid polypeptide reads, in one-letter code: MAPAGVSLRATILCLVAWAGLAAGDRVYIHPFHLVIHNESTCEQLAKANAGKPKDPTFIPAPIQAKTSPVDEKALQDQLVLVAAKLDTEDKLRAAMVGMLANFLGFRIYGMHSELWGVVHGATVLSPTAIFGTLASLYLGALDHTADRLQAILGVPWKDKNCTSRLDAHKVLSALQAVQGLLVAQGRADSQAQLLLSTVVGVFTAPGLHLKQPFVQGLALYTPVVLPRSLDFTELDVAAEKIDRFMQAVTGWKTGCSLMGASVDSTLAFNTYVHFQGKMKGFSLLAEPQEFWVDNSTSVSVPMLSGMGTFQHWSDVQDNFSVTQVPFTESACLLLIQPHYASDLDKVEGLTFQQNSLNWMKKLSPRAIHLTMPQLVLQGSYDLQDLLAQAELPAILHTELNLQKLSNDRIRVGEVLNSIFFELEADEREPTESTQQLNKPEVLEVTLNRPFLFAVYDQSATALHFLGRVANPLSTA.

A signal peptide spans 1-24 (MAPAGVSLRATILCLVAWAGLAAG). N-linked (GlcNAc...) asparagine glycans are attached at residues N38, N161, N295, and N319. A disulfide bridge connects residues C42 and C162.

Belongs to the serpin family. Post-translationally, in response to low blood pressure, the enzyme renin/REN cleaves angiotensinogen to produce angiotensin-1. Angiotensin-1 is a substrate of ACE (angiotensin converting enzyme) that removes a dipeptide to yield the physiologically active peptide angiotensin-2. Angiotensin-1 and angiotensin-2 can be further processed to generate angiotensin-3, angiotensin-4. Angiotensin 1-9 is cleaved from angiotensin-1 by ACE2 and can be further processed by ACE to produce angiotensin 1-7, angiotensin 1-5 and angiotensin 1-4. Angiotensin 1-7 has also been proposed to be cleaved from angiotensin-2 by ACE2 or from angiotensin-1 by MME (neprilysin). In terms of processing, the disulfide bond is labile. Angiotensinogen is present in the circulation in a near 40:60 ratio with the oxidized disulfide-bonded form, which preferentially interacts with receptor-bound renin.

The protein localises to the secreted. Essential component of the renin-angiotensin system (RAS), a potent regulator of blood pressure, body fluid and electrolyte homeostasis. Its function is as follows. Acts directly on vascular smooth muscle as a potent vasoconstrictor, affects cardiac contractility and heart rate through its action on the sympathetic nervous system, and alters renal sodium and water absorption through its ability to stimulate the zona glomerulosa cells of the adrenal cortex to synthesize and secrete aldosterone. Acts by binding to angiotensin receptors AGTR1 and AGTR2. Also binds the DEAR/FBXW7-AS1 receptor. In terms of biological role, stimulates aldosterone release. Functionally, is a ligand for the G-protein coupled receptor MAS1. Has vasodilator and antidiuretic effects. Has an antithrombotic effect that involves MAS1-mediated release of nitric oxide from platelets. This Pan troglodytes (Chimpanzee) protein is Angiotensinogen (AGT).